We begin with the raw amino-acid sequence, 287 residues long: ADP-dependent (S)-NAD(P)H-hydrate dehydratase (287 aa).

Residues G7–F283 enclose the YjeF C-terminal domain. Residues A42 and H159 each contribute to the (6S)-NADPHX site. AMP-binding positions include K196–D200 and G224. D225 is a (6S)-NADPHX binding site.

It belongs to the NnrD/CARKD family. Homotetramer. Mg(2+) serves as cofactor.

It catalyses the reaction (6S)-NADHX + ADP = AMP + phosphate + NADH + H(+). It carries out the reaction (6S)-NADPHX + ADP = AMP + phosphate + NADPH + H(+). Catalyzes the dehydration of the S-form of NAD(P)HX at the expense of ADP, which is converted to AMP. Together with NAD(P)HX epimerase, which catalyzes the epimerization of the S- and R-forms, the enzyme allows the repair of both epimers of NAD(P)HX, a damaged form of NAD(P)H that is a result of enzymatic or heat-dependent hydration. In Cenarchaeum symbiosum (strain A), this protein is ADP-dependent (S)-NAD(P)H-hydrate dehydratase.